We begin with the raw amino-acid sequence, 1386 residues long: DNA-directed RNA polymerase subunit beta (1386 aa).

It belongs to the RNA polymerase beta chain family. In terms of assembly, the RNAP catalytic core consists of 2 alpha, 1 beta, 1 beta' and 1 omega subunit. When a sigma factor is associated with the core the holoenzyme is formed, which can initiate transcription.

It carries out the reaction RNA(n) + a ribonucleoside 5'-triphosphate = RNA(n+1) + diphosphate. Functionally, DNA-dependent RNA polymerase catalyzes the transcription of DNA into RNA using the four ribonucleoside triphosphates as substrates. This is DNA-directed RNA polymerase subunit beta from Nitratiruptor sp. (strain SB155-2).